Here is a 65-residue protein sequence, read N- to C-terminus: Protein translocase subunit SecE (65 aa).

Residues 1-27 lie on the Cytoplasmic side of the membrane; the sequence is MEKLKEFLKGVRDELKRVVWPSRELVV. A helical transmembrane segment spans residues 28-59; sequence KATISVIIFSLAIGVYLWILDLTFTKIISFIL. Over 60–65 the chain is Periplasmic; the sequence is SLRGSL.

This sequence belongs to the SecE/SEC61-gamma family. Component of the Sec protein translocase complex. Heterotrimer consisting of SecY, SecE and SecG subunits. The heterotrimers can form oligomers, although 1 heterotrimer is thought to be able to translocate proteins. Interacts with SecDF, and other proteins may be involved. The channel interacts with SecA via subunit SecY.

It localises to the cell inner membrane. Functionally, essential subunit of the protein translocation channel SecYEG. Clamps together the 2 halves of SecY. May contact the channel plug during translocation. The protein is Protein translocase subunit SecE of Aquifex aeolicus (strain VF5).